Consider the following 372-residue polypeptide: MPLPDFHVSEPFTLGIELEMQVVNPPGYDLSQDSSPLIDAVKSQLTAGEVKHDITESMLEMATGVCRNIDQAAAQFSAMQQVILQAAADHHLEICGGGTHPFQKWQRQEVCDNARYQRTLENFGYLIQQATVFGQHVHIGCANGDDAIYLLHGLSRFVPHFIALAAASPYMQGSDTRFSSARLNIFSSFPDNGPMPWASNWQECEGLFRRLTYTSMIDSIKDLHWDIRPSPHFGTVEVRVMDTPLTLAHAVNIAGLIQATAHWLLTERPFRHQERDYLLYKFNRFQACRYGLEGTLTDVHTGNHHLLSDDTLRLLENVASSADNVGAASAINALRLQVKNGLNEARQMREFVTDGGSLIGLVKKHCEIWAGQ.

It belongs to the glutamate--cysteine ligase type 2 family. YbdK subfamily. Homodimer.

It carries out the reaction L-cysteine + L-glutamate + ATP = gamma-L-glutamyl-L-cysteine + ADP + phosphate + H(+). Functionally, ATP-dependent carboxylate-amine ligase which exhibits weak glutamate--cysteine ligase activity. The protein is Putative glutamate--cysteine ligase 2 of Citrobacter koseri (strain ATCC BAA-895 / CDC 4225-83 / SGSC4696).